The chain runs to 397 residues: Acetate kinase (397 aa).

Position 8 (Asn-8) interacts with Mg(2+). Residue Lys-15 participates in ATP binding. Residue Arg-92 participates in substrate binding. The Proton donor/acceptor role is filled by Asp-149. ATP is bound by residues 209-213 (HLGNG), 283-285 (DFR), and 331-335 (GVGEN). Mg(2+) is bound at residue Glu-385.

Belongs to the acetokinase family. Homodimer. Requires Mg(2+) as cofactor. Mn(2+) is required as a cofactor.

It localises to the cytoplasm. The catalysed reaction is acetate + ATP = acetyl phosphate + ADP. It functions in the pathway metabolic intermediate biosynthesis; acetyl-CoA biosynthesis; acetyl-CoA from acetate: step 1/2. In terms of biological role, catalyzes the formation of acetyl phosphate from acetate and ATP. Can also catalyze the reverse reaction. This chain is Acetate kinase, found in Corynebacterium glutamicum (strain R).